The chain runs to 242 residues: Small ribosomal subunit protein uS2 (242 aa).

The protein belongs to the universal ribosomal protein uS2 family.

The chain is Small ribosomal subunit protein uS2 from Aliivibrio fischeri (strain ATCC 700601 / ES114) (Vibrio fischeri).